A 207-amino-acid polypeptide reads, in one-letter code: MVATCLQVVGFVTSFVGWIGIIVTTSTNDWVVTCGYTIPTCRKLDELGSKGLWADCVMATGLYHCKPLVDILILPGYVQACRALMIAASVLGLPAILLLLTVLPCIRMGHEPGVAKYRRAQLAGVMLVLVALCAMVATIWFPVCAHRETTIVSFGYSLYAGWIGAVLCLVGGCVIVCCAGDAQAFGENRFYYSSGSSSPTHAKSAHV.

Residue M1 is a topological domain, cytoplasmic. A helical transmembrane segment spans residues V2–I22. Residues V23–R82 lie on the Extracellular side of the membrane. Residues A83–L103 traverse the membrane as a helical segment. Residues P104 to L122 lie on the Cytoplasmic side of the membrane. A helical transmembrane segment spans residues A123 to V143. At C144–S157 the chain is on the extracellular side. A helical membrane pass occupies residues L158–C178. Topologically, residues A179–V207 are cytoplasmic. Residues S193, S194, S197, and S198 each carry the phosphoserine modification.

It belongs to the claudin family. In terms of assembly, interacts with tetraspanin-3/TSPAN3. Interacts with OCLN.

It localises to the cell junction. It is found in the tight junction. Its subcellular location is the cell membrane. Plays a major role in tight junction-specific obliteration of the intercellular space, through calcium-independent cell-adhesion activity. The protein is Claudin-11 (CLDN11) of Bos taurus (Bovine).